Consider the following 275-residue polypeptide: NH(3)-dependent NAD(+) synthetase (275 aa).

Position 39 to 46 (39 to 46 (GLSGGVDS)) interacts with ATP. Residue Asp45 participates in Mg(2+) binding. Arg124 provides a ligand contact to deamido-NAD(+). Thr144 is an ATP binding site. A Mg(2+)-binding site is contributed by Glu149. Deamido-NAD(+)-binding residues include Lys157 and Asp164. The ATP site is built by Lys173 and Ser195. 255 to 256 (HK) contacts deamido-NAD(+).

This sequence belongs to the NAD synthetase family. In terms of assembly, homodimer.

The enzyme catalyses deamido-NAD(+) + NH4(+) + ATP = AMP + diphosphate + NAD(+) + H(+). The protein operates within cofactor biosynthesis; NAD(+) biosynthesis; NAD(+) from deamido-NAD(+) (ammonia route): step 1/1. In terms of biological role, catalyzes the ATP-dependent amidation of deamido-NAD to form NAD. Uses ammonia as a nitrogen source. This chain is NH(3)-dependent NAD(+) synthetase, found in Staphylothermus marinus (strain ATCC 43588 / DSM 3639 / JCM 9404 / F1).